The chain runs to 115 residues: UPF0127 protein PH1112 (115 aa).

The protein belongs to the UPF0127 family.

This Pyrococcus horikoshii (strain ATCC 700860 / DSM 12428 / JCM 9974 / NBRC 100139 / OT-3) protein is UPF0127 protein PH1112.